Here is an 832-residue protein sequence, read N- to C-terminus: Protein P (832 aa).

The terminal protein domain (TP) stretch occupies residues 1–177 (MPLSYQHFRR…FCGSPYSWEQ (177 aa)). The segment at 178–335 (KLQHGAESFH…YCLSHIVNLL (158 aa)) is spacer. Disordered regions lie at residues 186–229 (FHQQ…QGRS) and 275–305 (YPTVSTSKRRSSSGHAVDFHNLPPSSARSQS). The polymerase/reverse transcriptase domain (RT) stretch occupies residues 336–679 (EDWGPCTEHG…YMNLYPVARQ (344 aa)). The region spanning 346-589 (EHHIRIPRTP…YSLHFMGYVI (244 aa)) is the Reverse transcriptase domain. Mg(2+)-binding residues include aspartate 418, aspartate 540, and aspartate 541.

The protein belongs to the hepadnaviridae P protein family.

It carries out the reaction DNA(n) + a 2'-deoxyribonucleoside 5'-triphosphate = DNA(n+1) + diphosphate. It catalyses the reaction Endonucleolytic cleavage to 5'-phosphomonoester.. Activated by host HSP70 and HSP40 in vitro to be able to bind the epsilon loop of the pgRNA. Because deletion of the RNase H region renders the protein partly chaperone-independent, the chaperones may be needed indirectly to relieve occlusion of the RNA-binding site by this domain. Inhibited by several reverse-transcriptase inhibitors: Lamivudine, Adefovir and Entecavir. Multifunctional enzyme that converts the viral RNA genome into dsDNA in viral cytoplasmic capsids. This enzyme displays a DNA polymerase activity that can copy either DNA or RNA templates, and a ribonuclease H (RNase H) activity that cleaves the RNA strand of RNA-DNA heteroduplexes in a partially processive 3'- to 5'-endonucleasic mode. Neo-synthesized pregenomic RNA (pgRNA) are encapsidated together with the P protein, and reverse-transcribed inside the nucleocapsid. Initiation of reverse-transcription occurs first by binding the epsilon loop on the pgRNA genome, and is initiated by protein priming, thereby the 5'-end of (-)DNA is covalently linked to P protein. Partial (+)DNA is synthesized from the (-)DNA template and generates the relaxed circular DNA (RC-DNA) genome. After budding and infection, the RC-DNA migrates in the nucleus, and is converted into a plasmid-like covalently closed circular DNA (cccDNA). The activity of P protein does not seem to be necessary for cccDNA generation, and is presumably released from (+)DNA by host nuclear DNA repair machinery. The sequence is that of Protein P from Homo sapiens (Human).